The following is a 658-amino-acid chain: Structure-specific endonuclease subunit SLX4 (658 aa).

Disordered regions lie at residues 17 to 37 (VDSD…IPGD), 74 to 123 (GATE…KSIT), and 327 to 383 (QPGV…QVLQ). 2 stretches are compositionally biased toward low complexity: residues 75 to 90 (ATES…PPAK) and 99 to 108 (KAAGRTSTGT). Residues 365–374 (FPKSPTSTPE) show a composition bias toward polar residues.

It belongs to the SLX4 family. As to quaternary structure, forms a heterodimer with SLX1. In terms of processing, phosphorylated in response to DNA damage.

Its subcellular location is the nucleus. Functionally, regulatory subunit of the SLX1-SLX4 structure-specific endonuclease that resolves DNA secondary structures generated during DNA repair and recombination. Has endonuclease activity towards branched DNA substrates, introducing single-strand cuts in duplex DNA close to junctions with ss-DNA. This is Structure-specific endonuclease subunit SLX4 from Lachancea thermotolerans (strain ATCC 56472 / CBS 6340 / NRRL Y-8284) (Yeast).